Reading from the N-terminus, the 355-residue chain is Protein MxiC (355 aa).

Its subcellular location is the secreted. The protein resides in the host cell. Functionally, necessary for the secretion of IPA invasins. The polypeptide is Protein MxiC (mxiC) (Shigella flexneri).